A 460-amino-acid chain; its full sequence is Probable amino acid transporter skat-1 (460 aa).

10 helical membrane passes run 64 to 84, 132 to 152, 172 to 192, 194 to 214, 236 to 256, 270 to 290, 316 to 336, 362 to 382, 383 to 403, and 426 to 446; these read LGGLWVSFVMSFVIAGLNWYG, FVNVTILFYQLGMCSVAILFI, MILMATVSLFFILLTNMFTEM, IVSFFALVSSVFFVIGAAVIM, TITMIGMSMYAFEGQTMILPI, FGVLSTTMIICTAFMTALGFF, VNVFLMLQSLLGNSIAMYVVY, GFRVFWVLVTYLMAVLIPKLE, IMIPLVGVTSGALCALIFPPF, and IFINLVVMAIGVFAIIAGVYT.

The protein belongs to the amino acid/polyamine transporter 2 family. In terms of tissue distribution, expressed in the head, tail, body and ventral nerve cord neurons, muscles of the vulva, and intestine.

It is found in the membrane. The protein localises to the cytoplasmic granule. Functionally, plays a role in the accumulation of vital dyes and endogenous fluorescent compounds in lysosome related organelles. Has an effect on lysosome related organelle (LRO) function, in a pathway with serotonin. In Caenorhabditis elegans, this protein is Probable amino acid transporter skat-1.